Consider the following 466-residue polypeptide: 3-isopropylmalate dehydratase large subunit (466 aa).

[4Fe-4S] cluster is bound by residues C347, C407, and C410.

This sequence belongs to the aconitase/IPM isomerase family. LeuC type 1 subfamily. In terms of assembly, heterodimer of LeuC and LeuD. The cofactor is [4Fe-4S] cluster.

It carries out the reaction (2R,3S)-3-isopropylmalate = (2S)-2-isopropylmalate. It participates in amino-acid biosynthesis; L-leucine biosynthesis; L-leucine from 3-methyl-2-oxobutanoate: step 2/4. Functionally, catalyzes the isomerization between 2-isopropylmalate and 3-isopropylmalate, via the formation of 2-isopropylmaleate. This chain is 3-isopropylmalate dehydratase large subunit, found in Pseudoalteromonas translucida (strain TAC 125).